Reading from the N-terminus, the 373-residue chain is Superinfection exclusion protein (373 aa).

Positions 1–15 (MIVLLILSLACTAFT) are cleaved as a signal peptide.

Belongs to the serpin family. Orthopoxvirus OPG040 subfamily. Interacts with A56 protein.

The protein localises to the virion membrane. It is found in the host cell membrane. Functionally, prevents cell to cell fusion via its interaction with A56 protein. The A56-K2 complex associates with components of the entry fusion complex (EFC) presumably to avoid superinfection and syncytium formation. This is Superinfection exclusion protein (OPG040) from Homo sapiens (Human).